Consider the following 586-residue polypeptide: Major facilitator superfamily domain-containing protein 6-like (586 aa).

The next 2 membrane-spanning stretches (helical) occupy residues 50–70 and 78–98; these read TLMGTKHLIAAFWAPVCAFLA and ALLIGSLLGSVGASLLMVLVP. Positions 133–160 are disordered; sequence AQESASSHPAKRTAEVEMPGFRNPPGES. 9 helical membrane passes run 246-266, 287-307, 326-346, 361-381, 400-420, 433-455, 456-476, 499-519, and 521-541; these read FILSLGSVAFWELLTAPLEQV, LWVWRLLGMSAGVCGITALVG, GYSVVSTLALLVSIAFPIPIC, IVGGDPHLILLASTTVLVGAI, ELVMGFSVALSLLGEILLHPF, LVGLGLSCLAGQLLYYSFLWSWW, SVLPIQILSAISNRALWWAVG, FYGSGCSLGSFVGGFVVMRFS, and AVLYQACCVALLLWLALLLSI.

Belongs to the major facilitator superfamily. MFSD6 family.

Its subcellular location is the membrane. This Homo sapiens (Human) protein is Major facilitator superfamily domain-containing protein 6-like (MFSD6L).